Reading from the N-terminus, the 133-residue chain is UPF0146 protein MTH_1000 (133 aa).

The protein belongs to the UPF0146 family.

In Methanothermobacter thermautotrophicus (strain ATCC 29096 / DSM 1053 / JCM 10044 / NBRC 100330 / Delta H) (Methanobacterium thermoautotrophicum), this protein is UPF0146 protein MTH_1000.